A 313-amino-acid chain; its full sequence is Guanine nucleotide-binding protein-like 3-like protein (313 aa).

Positions 1 to 14 (MGIKKKRQSKRLTT) are enriched in basic residues. Residues 1 to 41 (MGIKKKRQSKRLTTRKREGMLKRARANERKKRRMDRKMQAK) are disordered. Basic and acidic residues predominate over residues 15–27 (RKREGMLKRARAN). GTP-binding positions include 95–98 (SKSD), 178–185 (GNPGSGKN), and 212–215 (TLSS).

The protein belongs to the MMR1/HSR1 GTP-binding protein family.

It localises to the nucleus. The protein localises to the nucleolus. Functionally, required for normal processing of ribosomal pre-rRNA. Required for cell proliferation. Binds GTP. This chain is Guanine nucleotide-binding protein-like 3-like protein, found in Encephalitozoon cuniculi (strain GB-M1) (Microsporidian parasite).